A 303-amino-acid chain; its full sequence is Acetyltransferase ataH (303 aa).

Positions 1–23 (MPTTAAFLRALYILTTLRGIGTS) are cleaved as a signal peptide. 3 helical membrane passes run 42–62 (FLLH…MMTF), 194–214 (LVFA…GIML), and 257–277 (GYIW…FPLF).

It belongs to the wax synthase family.

It is found in the membrane. It functions in the pathway mycotoxin biosynthesis. In terms of biological role, acetyltransferase; part of the gene cluster that mediates the biosynthesis of acetylaranotin, a member of the epipolythiodioxopiperazine (ETP) class of toxins characterized by a disulfide-bridged cyclic dipeptide. The first step of acetylaranotin biosynthesis is performed by the NRPS ataP which produces diketopiperazine cyclo-L-Phe-L-Phe via the condensation of 2 phenylalanines (L-Phe). The ataC domain of ataTC then catalyzes the formation of bishydroxylation of cyclo-L-Phe-L-Phe. The glutathione S-transferase domain ataG in ataIMG further catalyzes the conjugation of two glutathiones to the bishydroxylated intermediate. Next, the dipeptidase ataJ removes the Glu residues. The following step is performed by the carbon sulfur lyase domain ataI of ataIMG which may convert the bis-cysteinyl adduct to yield an epidithiol intermediate. The ataT domain from ataTC then catalyzes the oxidation of the free dithiols, followed by a cyclization step catalyzed by the cytochrome P450 ataF. AtaF probably acts as an epoxidase to promote a dual epoxidation formation at C8 and C9 along with C8' and C9', followed by the spontaneous nucleophilic attack of the amide nitrogens N10 and N10' to yield an intermediate with the pyrrolidine partial structure. The final steps of acetylaranotin biosynthesis involve the acetylation and ring rearrangement of an epitetrathiodiketopiperazine intermediate to produce acetylaranotin. AtaH probably catalyzes the acetylation of epitetrathiodiketopiperazine to produce a diacetate and ataY is responsible for the formation of the dihydrooxepin moiety that converts the diacetate intermediate to acetylaranotin via acetylapoaranotin. Both enzymes could function independently in the absence of the other. The acetylaranotin bis-thiomethyltransferase ataS located outside of acetylaranotin gene cluster is the main thiomethyltransferase responsible for converting acetylaranotin and its related intermediates to their methylated forms. The polypeptide is Acetyltransferase ataH (Aspergillus terreus (strain NIH 2624 / FGSC A1156)).